The chain runs to 72 residues: Sperm protein associated with the nucleus on the X chromosome N1 (72 aa).

Positions 1-40 are disordered; sequence MEKPTSSTNGEKRKSPCDSNNKNDEMQETPNRDLVLEPSL. The segment covering 10–35 has biased composition (basic and acidic residues); it reads GEKRKSPCDSNNKNDEMQETPNRDLV.

The protein belongs to the SPAN-X family.

This is Sperm protein associated with the nucleus on the X chromosome N1 (SPANXN1) from Gorilla gorilla gorilla (Western lowland gorilla).